Consider the following 404-residue polypeptide: Keratin, type I cuticular Ha3-I (404 aa).

Residues 1 to 56 are head; the sequence is MPYNCCLPAMSCRTSCSSRPCVPPSCHGCTLPGACNIPANVGNCNWFCEGSFNGNE. In terms of domain architecture, IF rod spans 56 to 367; sequence EKETMQFLND…GLLESEDCKL (312 aa). Residues 57–91 are coil 1A; it reads KETMQFLNDRLASYMEKVRQLERENAELECRIQER. Residues 92 to 102 form a linker 1 region; that stretch reads NQQQDPLVCPA. The segment at 103 to 203 is coil 1B; that stretch reads YQAYFRTIEE…HEQEVNTLRC (101 aa). The interval 204–219 is linker 12; that stretch reads QLGDRLNVEVDAAPTV. The segment at 220-363 is coil 2; the sequence is DLNRVLNETR…NTYRGLLESE (144 aa). The interval 364-404 is tail; sequence DCKLPCNPCATTNACDKPIGPCVPNPCVTRPRCGPCNTFVR.

The protein belongs to the intermediate filament family.

This chain is Keratin, type I cuticular Ha3-I, found in Mus musculus (Mouse).